The sequence spans 122 residues: MTTTLYTSDHEWLAIEGDVATVGITDYAQSQLGDVVFIELPKLGRALKKAEAAAVVESVKAASDVYAPVTGEVLETNDALAAEPALVNSDAQGKAWFFKIKIADKSELGGLMDEAAYKAHTA.

The Lipoyl-binding domain occupies 19-101 (VATVGITDYA…QGKAWFFKIK (83 aa)). N6-lipoyllysine is present on K60.

The protein belongs to the GcvH family. The glycine cleavage system is composed of four proteins: P, T, L and H. The cofactor is (R)-lipoate.

The glycine cleavage system catalyzes the degradation of glycine. The H protein shuttles the methylamine group of glycine from the P protein to the T protein. The sequence is that of Glycine cleavage system H protein from Bradyrhizobium diazoefficiens (strain JCM 10833 / BCRC 13528 / IAM 13628 / NBRC 14792 / USDA 110).